The primary structure comprises 25 residues: MRAKWRKKRVRRLKRKRRKVRARSK.

Residues 1–25 (MRAKWRKKRVRRLKRKRRKVRARSK) are disordered.

It belongs to the eukaryotic ribosomal protein eS32 family. As to quaternary structure, component of the small ribosomal subunit.

This chain is Small ribosomal subunit protein eS32 (RPL41), found in Eremothecium gossypii (strain ATCC 10895 / CBS 109.51 / FGSC 9923 / NRRL Y-1056) (Yeast).